A 64-amino-acid polypeptide reads, in one-letter code: U9-ctenitoxin-Pr1a (64 aa).

5 disulfide bridges follow: cysteine 3–cysteine 15, cysteine 9–cysteine 24, cysteine 14–cysteine 47, cysteine 34–cysteine 55, and cysteine 49–cysteine 61.

Expressed by the venom gland.

Its subcellular location is the secreted. In terms of biological role, non-toxic to mice and insects. The protein is U9-ctenitoxin-Pr1a of Phoneutria reidyi (Brazilian Amazonian armed spider).